The following is a 295-amino-acid chain: Deoxyuridine 5'-triphosphate nucleotidohydrolase (295 aa).

Substrate is bound at residue R178–G180. A compositionally biased stretch (basic and acidic residues) spans N260–V272. The tract at residues N260–F295 is disordered.

It belongs to the dUTPase family. Requires Mg(2+) as cofactor.

The catalysed reaction is dUTP + H2O = dUMP + diphosphate + H(+). Functionally, involved in nucleotide metabolism: produces dUMP, the immediate precursor of thymidine nucleotides and decreases the intracellular concentration of dUTP to avoid uracil incorporation into viral DNA. The sequence is that of Deoxyuridine 5'-triphosphate nucleotidohydrolase from Human herpesvirus 8 type P (isolate GK18) (HHV-8).